The sequence spans 702 residues: Polyribonucleotide nucleotidyltransferase (702 aa).

Residues Asp-487 and Asp-493 each contribute to the Mg(2+) site. The region spanning 554-613 (PKILTMQINPDKIRDVIGPSGKQINKIIEETGVKIDIEQDGTIFISSVNEEMNKKAKKII) is the KH domain. In terms of domain architecture, S1 motif spans 623–691 (GQVYLGKVKR…KQGRVNLSRK (69 aa)).

Belongs to the polyribonucleotide nucleotidyltransferase family. Requires Mg(2+) as cofactor.

The protein resides in the cytoplasm. It carries out the reaction RNA(n+1) + phosphate = RNA(n) + a ribonucleoside 5'-diphosphate. Involved in mRNA degradation. Catalyzes the phosphorolysis of single-stranded polyribonucleotides processively in the 3'- to 5'-direction. The polypeptide is Polyribonucleotide nucleotidyltransferase (Anoxybacillus flavithermus (strain DSM 21510 / WK1)).